A 288-amino-acid polypeptide reads, in one-letter code: HTH-type transcriptional regulator CzcR (288 aa).

Residues 1 to 58 enclose the HTH lysR-type domain; the sequence is MELRDLQIFQSVADQGSVSSAAKELNYVQSNVTTRIKQLENELKTPLFYRHKRGMTLT. Residues 18–37 constitute a DNA-binding region (H-T-H motif); it reads VSSAAKELNYVQSNVTTRIK.

Belongs to the LysR transcriptional regulatory family.

This Bacillus thuringiensis subsp. konkukian (strain 97-27) protein is HTH-type transcriptional regulator CzcR (czcR).